A 126-amino-acid polypeptide reads, in one-letter code: 5-hydroxyisourate hydrolase (126 aa).

Substrate contacts are provided by histidine 16, arginine 54, and tyrosine 123.

It belongs to the transthyretin family. 5-hydroxyisourate hydrolase subfamily. As to quaternary structure, homotetramer.

It catalyses the reaction 5-hydroxyisourate + H2O = 5-hydroxy-2-oxo-4-ureido-2,5-dihydro-1H-imidazole-5-carboxylate + H(+). In terms of biological role, catalyzes the hydrolysis of 5-hydroxyisourate (HIU) to 2-oxo-4-hydroxy-4-carboxy-5-ureidoimidazoline (OHCU). This is 5-hydroxyisourate hydrolase from Pseudomonas aeruginosa (strain ATCC 15692 / DSM 22644 / CIP 104116 / JCM 14847 / LMG 12228 / 1C / PRS 101 / PAO1).